The sequence spans 138 residues: Large ribosomal subunit protein bL19 (138 aa).

Belongs to the bacterial ribosomal protein bL19 family.

In terms of biological role, this protein is located at the 30S-50S ribosomal subunit interface and may play a role in the structure and function of the aminoacyl-tRNA binding site. This chain is Large ribosomal subunit protein bL19, found in Rickettsia typhi (strain ATCC VR-144 / Wilmington).